A 62-amino-acid chain; its full sequence is Cuticle protein 6.4 (62 aa).

In terms of biological role, component of the cuticle of migratory locust which contains more than 100 different structural proteins. The chain is Cuticle protein 6.4 from Locusta migratoria (Migratory locust).